Consider the following 247-residue polypeptide: Proteasome subunit alpha type-7-1 (247 aa).

The protein belongs to the peptidase T1A family. As to quaternary structure, the 26S proteasome consists of a 20S proteasome core and two 19S regulatory subunits. The 20S proteasome core is composed of 28 subunits that are arranged in four stacked rings, resulting in a barrel-shaped structure. The two end rings are each formed by seven alpha subunits, and the two central rings are each formed by seven beta subunits. The catalytic chamber with the active sites is on the inside of the barrel.

It localises to the cytoplasm. Its subcellular location is the nucleus. In terms of biological role, the proteasome is a multicatalytic proteinase complex which is characterized by its ability to cleave peptides with Arg, Phe, Tyr, Leu, and Glu adjacent to the leaving group at neutral or slightly basic pH. The proteasome has an ATP-dependent proteolytic activity. This chain is Proteasome subunit alpha type-7-1 (Pros28.1), found in Drosophila virilis (Fruit fly).